The chain runs to 353 residues: Very-long-chain 3-oxoacyl-CoA reductase (353 aa).

The chain crosses the membrane as a helical span at residues 33 to 53; sequence AAWALIAAGGFFVISRALLFG. NADP(+)-binding residues include V78, D133, D141, N160, Y227, K231, I260, and S262. Y227 acts as the Proton donor in catalysis. The active-site Lowers pKa of active site Tyr is the K231.

It belongs to the short-chain dehydrogenases/reductases (SDR) family.

The protein localises to the endoplasmic reticulum membrane. The enzyme catalyses a very-long-chain (3R)-3-hydroxyacyl-CoA + NADP(+) = a very-long-chain 3-oxoacyl-CoA + NADPH + H(+). It functions in the pathway lipid metabolism; fatty acid biosynthesis. Component of the microsomal membrane bound fatty acid elongation system, which produces the 26-carbon very long-chain fatty acids (VLCFA) from palmitate. Catalyzes the reduction of the 3-ketoacyl-CoA intermediate that is formed in each cycle of fatty acid elongation. VLCFAs serve as precursors for ceramide and sphingolipids. The chain is Very-long-chain 3-oxoacyl-CoA reductase from Aspergillus terreus (strain NIH 2624 / FGSC A1156).